Reading from the N-terminus, the 500-residue chain is Protein psiE (500 aa).

Residues 1-18 (MKLISVLITFLLATVIYS) form the signal peptide. An N-linked (GlcNAc...) asparagine glycan is attached at asparagine 59. The PA14 domain occupies 114-256 (TYDTTRKIYV…KDYCGVCQGD (143 aa)). Asparagine 314, asparagine 341, asparagine 366, asparagine 420, and asparagine 469 each carry an N-linked (GlcNAc...) asparagine glycan.

The protein belongs to the prespore-cell-inducing factor family.

Its subcellular location is the secreted. This is Protein psiE (psiE) from Dictyostelium discoideum (Social amoeba).